The primary structure comprises 274 residues: Beta-lactamase OXA-9 (274 aa).

An N-terminal signal peptide occupies residues 1–24 (MKKILLLHMLVFVSATLPISSVAS). Ser-58 acts as the Acyl-ester intermediate in catalysis. An N6-carboxylysine modification is found at Lys-61. 206 to 208 (KSG) lines the substrate pocket.

This sequence belongs to the class-D beta-lactamase family.

It carries out the reaction a beta-lactam + H2O = a substituted beta-amino acid. Oxacillin-hydrolyzing beta-lactamase. Confers resistance to beta-lactam antibiotics but at a significantly lower level than the TEM bla gene product. This Klebsiella aerogenes (Enterobacter aerogenes) protein is Beta-lactamase OXA-9 (bla).